The chain runs to 491 residues: MKYKNLRDFLELLEKQGELKRITQEIDPYLEMTEIADRTLRAGGPALLFENPKGYEIPVLCNLFGTPKRVALGMGQEDVTALRDVGRLLAFLKEPEQPKSFKDLWSSLPQFKQVLNMPTKVLSKAECQQIVFSDAEVDLYKLPIMHCWKDDVAPLVTWGLTITKGPSKKRQNLGIYRQQLIGKNKLIMRWLSHRGGALDFQEWKEARPNQPFPISVALGADPATILGAVTPVPDTLSEYAFAGLLRGNKTEVVKSISNDLEIPASAEIILEGYIDPTETALEGPYGDHTGYYNEQEYFPVFTVTHLTMRKDPIYHSTYTGRPPDEPAVLGEALNEVFIPILQKQFPEIVDFYLPPEGCSYRLAVVTIKKQYAGHAKRVMMGVWSFLRQFMYTKFVIVCDDDINARDWKDVIWAITTRSDPARDCTIIENTPIDYLDFASPIAGLGSKMGIDATNKWIGETQREWGTPIKKAPNVVKRIDDIWESLNIFAPK.

Asparagine 172 provides a ligand contact to Mn(2+). Residues 175–177 (IYR), 189–191 (RWL), and 194–195 (RG) contribute to the prenylated FMN site. Mn(2+) is bound at residue glutamate 238. The active-site Proton donor is aspartate 287.

Belongs to the UbiD family. Homohexamer. Requires prenylated FMN as cofactor. The cofactor is Mn(2+).

It localises to the cell membrane. It carries out the reaction a 4-hydroxy-3-(all-trans-polyprenyl)benzoate + H(+) = a 2-(all-trans-polyprenyl)phenol + CO2. It participates in cofactor biosynthesis; ubiquinone biosynthesis. Catalyzes the decarboxylation of 3-octaprenyl-4-hydroxy benzoate to 2-octaprenylphenol, an intermediate step in ubiquinone biosynthesis. This Histophilus somni (strain 2336) (Haemophilus somnus) protein is 3-octaprenyl-4-hydroxybenzoate carboxy-lyase.